A 490-amino-acid polypeptide reads, in one-letter code: Probable glycine dehydrogenase (decarboxylating) subunit 2 (490 aa).

K273 carries the post-translational modification N6-(pyridoxal phosphate)lysine.

The protein belongs to the GcvP family. C-terminal subunit subfamily. The glycine cleavage system is composed of four proteins: P, T, L and H. In this organism, the P 'protein' is a heterodimer of two subunits. Requires pyridoxal 5'-phosphate as cofactor.

The enzyme catalyses N(6)-[(R)-lipoyl]-L-lysyl-[glycine-cleavage complex H protein] + glycine + H(+) = N(6)-[(R)-S(8)-aminomethyldihydrolipoyl]-L-lysyl-[glycine-cleavage complex H protein] + CO2. Functionally, the glycine cleavage system catalyzes the degradation of glycine. The P protein binds the alpha-amino group of glycine through its pyridoxal phosphate cofactor; CO(2) is released and the remaining methylamine moiety is then transferred to the lipoamide cofactor of the H protein. This is Probable glycine dehydrogenase (decarboxylating) subunit 2 from Staphylococcus aureus (strain Mu50 / ATCC 700699).